A 149-amino-acid chain; its full sequence is Probable glycine-rich RNA-binding protein 1 (149 aa).

The RRM domain maps to 8–83 (YRCFVGGLAW…LDGRNITAQA (76 aa)). The segment at 80–149 (TAQARGSGTR…GRSEGGSWRN (70 aa)) is disordered. Composition is skewed to gly residues over residues 87–101 (GTRG…SGGY), 110–123 (YNRG…GGYG), and 131–143 (YGDG…GRSE).

Belongs to the GR-RBP family.

In terms of biological role, possibly has a role in RNA transcription or processing during stress. This is Probable glycine-rich RNA-binding protein 1 (RBG1) from Arabidopsis thaliana (Mouse-ear cress).